The sequence spans 309 residues: Glutaminase (309 aa).

Ser-64, Asn-114, Glu-160, Asn-167, Tyr-191, Tyr-243, and Val-261 together coordinate substrate.

It belongs to the glutaminase family. Homotetramer.

It carries out the reaction L-glutamine + H2O = L-glutamate + NH4(+). The sequence is that of Glutaminase from Rhizobium rhizogenes (strain K84 / ATCC BAA-868) (Agrobacterium radiobacter).